The following is a 415-amino-acid chain: Lipoyl synthase, mitochondrial (415 aa).

The transit peptide at 1–32 directs the protein to the mitochondrion; it reads MAVSTSHFRSLCASSRSLSRTGIVAPISCRGY. The segment at 30–50 is disordered; sequence RGYATTEPSPSATSTTTTTTA. Residues 33–49 show a composition bias toward low complexity; sequence ATTEPSPSATSTTTTTT. Residues cysteine 132, cysteine 137, cysteine 143, cysteine 163, cysteine 167, cysteine 170, and serine 378 each contribute to the [4Fe-4S] cluster site. A Radical SAM core domain is found at 146–367; sequence GSDKSAATAT…RQRALDMGFL (222 aa).

It belongs to the radical SAM superfamily. Lipoyl synthase family. [4Fe-4S] cluster serves as cofactor.

The protein resides in the mitochondrion. It catalyses the reaction [[Fe-S] cluster scaffold protein carrying a second [4Fe-4S](2+) cluster] + N(6)-octanoyl-L-lysyl-[protein] + 2 oxidized [2Fe-2S]-[ferredoxin] + 2 S-adenosyl-L-methionine + 4 H(+) = [[Fe-S] cluster scaffold protein] + N(6)-[(R)-dihydrolipoyl]-L-lysyl-[protein] + 4 Fe(3+) + 2 hydrogen sulfide + 2 5'-deoxyadenosine + 2 L-methionine + 2 reduced [2Fe-2S]-[ferredoxin]. It functions in the pathway protein modification; protein lipoylation via endogenous pathway; protein N(6)-(lipoyl)lysine from octanoyl-[acyl-carrier-protein]: step 2/2. Catalyzes the radical-mediated insertion of two sulfur atoms into the C-6 and C-8 positions of the octanoyl moiety bound to the lipoyl domains of lipoate-dependent enzymes, thereby converting the octanoylated domains into lipoylated derivatives. This chain is Lipoyl synthase, mitochondrial, found in Neosartorya fischeri (strain ATCC 1020 / DSM 3700 / CBS 544.65 / FGSC A1164 / JCM 1740 / NRRL 181 / WB 181) (Aspergillus fischerianus).